The following is a 176-amino-acid chain: Transcription factor E (176 aa).

Residues 8–90 (EDPVIQKYLH…LWTFQYEKIP (83 aa)) enclose the HTH TFE/IIEalpha-type domain.

Belongs to the TFE family. As to quaternary structure, monomer. Interaction with RNA polymerase subunits RpoF and RpoE is necessary for Tfe stimulatory transcription activity. Able to interact with Tbp and RNA polymerase in the absence of DNA promoter. Interacts both with the preinitiation and elongation complexes.

Functionally, transcription factor that plays a role in the activation of archaeal genes transcribed by RNA polymerase. Facilitates transcription initiation by enhancing TATA-box recognition by TATA-box-binding protein (Tbp), and transcription factor B (Tfb) and RNA polymerase recruitment. Not absolutely required for transcription in vitro, but particularly important in cases where Tbp or Tfb function is not optimal. It dynamically alters the nucleic acid-binding properties of RNA polymerases by stabilizing the initiation complex and destabilizing elongation complexes. Seems to translocate with the RNA polymerase following initiation and acts by binding to the non template strand of the transcription bubble in elongation complexes. This chain is Transcription factor E, found in Haloarcula marismortui (strain ATCC 43049 / DSM 3752 / JCM 8966 / VKM B-1809) (Halobacterium marismortui).